Consider the following 348-residue polypeptide: Dual-specificity RNA methyltransferase RlmN (348 aa).

Glu-94 functions as the Proton acceptor in the catalytic mechanism. The Radical SAM core domain maps to 100-330; it reads GKHNWTACIS…TAIIRASRGR (231 aa). An intrachain disulfide couples Cys-107 to Cys-336. [4Fe-4S] cluster-binding residues include Cys-114, Cys-118, and Cys-121. Residues 163–164, Ser-195, 217–219, and Asn-293 contribute to the S-adenosyl-L-methionine site; these read GE and SLN. The active-site S-methylcysteine intermediate is the Cys-336.

It belongs to the radical SAM superfamily. RlmN family. Requires [4Fe-4S] cluster as cofactor.

It localises to the cytoplasm. It carries out the reaction adenosine(2503) in 23S rRNA + 2 reduced [2Fe-2S]-[ferredoxin] + 2 S-adenosyl-L-methionine = 2-methyladenosine(2503) in 23S rRNA + 5'-deoxyadenosine + L-methionine + 2 oxidized [2Fe-2S]-[ferredoxin] + S-adenosyl-L-homocysteine. The enzyme catalyses adenosine(37) in tRNA + 2 reduced [2Fe-2S]-[ferredoxin] + 2 S-adenosyl-L-methionine = 2-methyladenosine(37) in tRNA + 5'-deoxyadenosine + L-methionine + 2 oxidized [2Fe-2S]-[ferredoxin] + S-adenosyl-L-homocysteine. Specifically methylates position 2 of adenine 2503 in 23S rRNA and position 2 of adenine 37 in tRNAs. m2A2503 modification seems to play a crucial role in the proofreading step occurring at the peptidyl transferase center and thus would serve to optimize ribosomal fidelity. The sequence is that of Dual-specificity RNA methyltransferase RlmN from Syntrophus aciditrophicus (strain SB).